The primary structure comprises 367 residues: Deoxyhypusine synthase-like protein (367 aa).

The segment at 1 to 23 (MKSLFQRRASKVRETEAMNAPVP) is disordered.

It belongs to the deoxyhypusine synthase family.

In Caulobacter vibrioides (strain ATCC 19089 / CIP 103742 / CB 15) (Caulobacter crescentus), this protein is Deoxyhypusine synthase-like protein.